The primary structure comprises 503 residues: Cytosolic carboxypeptidase 6 (503 aa).

The Peptidase M14 domain maps to 167–438; that stretch reads YPYTYTRFQH…NVARTFLDYY (272 aa). Zn(2+)-binding residues include His230, Glu233, and His328. Catalysis depends on Glu401, which acts as the Proton donor/acceptor. Basic and acidic residues-rich tracts occupy residues 459–469 and 487–503; these read IEVQRRKEKSP and KGDK…STPF. Positions 459-503 are disordered; that stretch reads IEVQRRKEKSPPYKHPLLRGPASNYPNSKGDKKSSVNHKDPSTPF.

The protein belongs to the peptidase M14 family. In terms of assembly, interacts with MYLK. It depends on Zn(2+) as a cofactor.

Its subcellular location is the cytoplasm. The protein resides in the cytosol. The protein localises to the cytoskeleton. It is found in the microtubule organizing center. It localises to the centrosome. Its subcellular location is the centriole. The protein resides in the golgi apparatus. The protein localises to the cilium basal body. It catalyses the reaction (L-glutamyl)(n+1)-gamma-L-glutamyl-L-glutamyl-[protein] + H2O = (L-glutamyl)(n)-gamma-L-glutamyl-L-glutamyl-[protein] + L-glutamate. It carries out the reaction C-terminal L-alpha-aminoacyl-L-glutamyl-L-glutamyl-[tubulin] + H2O = C-terminal L-alpha-aminoacyl-L-glutamyl-[tubulin] + L-glutamate. Functionally, metallocarboxypeptidase that mediates protein deglutamylation of tubulin and non-tubulin target proteins. Catalyzes the removal of polyglutamate side chains present on the gamma-carboxyl group of glutamate residues within the C-terminal tail of tubulin protein. Specifically cleaves tubulin long-side-chains, while it is not able to remove the branching point glutamate. Also catalyzes the removal of polyglutamate residues from the carboxy-terminus of non-tubulin proteins such as MYLK. Mediates the deglutamylation of nucleotidyltransferase CGAS, leading to CGAS antiviral defense response activation. Involved in KLF4 deglutamylation which promotes KLF4 proteasome-mediated degradation, thereby negatively regulating cell pluripotency maintenance and embryogenesis. The protein is Cytosolic carboxypeptidase 6 of Homo sapiens (Human).